A 565-amino-acid polypeptide reads, in one-letter code: NAD-dependent malic enzyme (565 aa).

Residue Tyr-104 is the Proton donor of the active site. Arg-157 is a binding site for NAD(+). Lys-175 functions as the Proton acceptor in the catalytic mechanism. Residues Glu-246, Asp-247, and Asp-270 each contribute to the a divalent metal cation site. Residues Asp-270 and Asn-418 each contribute to the NAD(+) site.

It belongs to the malic enzymes family. In terms of assembly, homotetramer. Mg(2+) serves as cofactor. Mn(2+) is required as a cofactor.

The catalysed reaction is (S)-malate + NAD(+) = pyruvate + CO2 + NADH. It catalyses the reaction oxaloacetate + H(+) = pyruvate + CO2. This is NAD-dependent malic enzyme from Shigella flexneri serotype 5b (strain 8401).